A 636-amino-acid chain; its full sequence is 1-deoxy-D-xylulose-5-phosphate synthase (636 aa).

Thiamine diphosphate is bound by residues H74 and 115 to 117; that span reads GHA. Residue D146 coordinates Mg(2+). Residues 147 to 148, N175, Y285, and E368 contribute to the thiamine diphosphate site; that span reads GA. A Mg(2+)-binding site is contributed by N175.

It belongs to the transketolase family. DXPS subfamily. Homodimer. Mg(2+) is required as a cofactor. It depends on thiamine diphosphate as a cofactor.

The catalysed reaction is D-glyceraldehyde 3-phosphate + pyruvate + H(+) = 1-deoxy-D-xylulose 5-phosphate + CO2. It functions in the pathway metabolic intermediate biosynthesis; 1-deoxy-D-xylulose 5-phosphate biosynthesis; 1-deoxy-D-xylulose 5-phosphate from D-glyceraldehyde 3-phosphate and pyruvate: step 1/1. Functionally, catalyzes the acyloin condensation reaction between C atoms 2 and 3 of pyruvate and glyceraldehyde 3-phosphate to yield 1-deoxy-D-xylulose-5-phosphate (DXP). The polypeptide is 1-deoxy-D-xylulose-5-phosphate synthase (Anaeromyxobacter dehalogenans (strain 2CP-1 / ATCC BAA-258)).